We begin with the raw amino-acid sequence, 154 residues long: Calmodulin-like protein 6 (154 aa).

EF-hand domains are found at residues 1–36 (MDST…LGII), 37–72 (IPED…IMVE), 77–112 (VGEE…LGLK), and 115–150 (KTLE…GRFF). Positions 14, 16, 18, 20, 25, 50, 52, 54, 56, 61, 90, 92, 94, 101, 128, 130, 132, 134, and 139 each coordinate Ca(2+).

The protein belongs to the calmodulin family.

Potential calcium sensor. The chain is Calmodulin-like protein 6 (CML6) from Arabidopsis thaliana (Mouse-ear cress).